The following is a 373-amino-acid chain: Leucine aminopeptidase 1 (373 aa).

A signal peptide spans 1–18; the sequence is MKLLSVLALSATATSVLG. Residues histidine 176 and aspartate 195 each contribute to the Zn(2+) site. N-linked (GlcNAc...) asparagine glycosylation occurs at asparagine 196. Positions 234 and 261 each coordinate Zn(2+). N-linked (GlcNAc...) asparagine glycosylation occurs at asparagine 288. Cysteine 310 and cysteine 314 are oxidised to a cystine. Histidine 343 contributes to the Zn(2+) binding site. Asparagine 348 carries an N-linked (GlcNAc...) asparagine glycan.

This sequence belongs to the peptidase M28 family. M28E subfamily. In terms of assembly, monomer. It depends on Zn(2+) as a cofactor.

The protein resides in the secreted. Activity is inhibited by EDTA, o-phenanthroline, bestatin and amastatin. Its function is as follows. Extracellular aminopeptidase which contributes to pathogenicity. The polypeptide is Leucine aminopeptidase 1 (LAP1) (Trichophyton rubrum (Athlete's foot fungus)).